We begin with the raw amino-acid sequence, 398 residues long: MMWLLLTTTCLICGTLNAGGFLDLENEVNPEVWMNTSEIIIYNGYPSEEYEVTTEDGYILLVNRIPYGRTHARSTGPRPVVYMQHALFADNAYWLENYANGSLGFLLADAGYDVWMGNSRGNTWSRRHKTLSETDEKFWAFSFDEMAKYDLPGVIDFIVNKTGQEKLYFIGHSLGTTIGFVAFSTMPELAQRIKMNFALGPTISFKYPTGIFTRFFLLPNSIIKAVFGTKGFFLEDKKTKIASTKICNNKILWLICSEFMSLWAGSNKKNMNQSRMDVYMSHAPTGSSVHNILHIKQLYHSDEFRAYDWGNDADNMKHYNQSHPPIYDLTAMKVPTAIWAGGHDVLVTPQDVARILPQIKSLHYFKLLPDWNHFDFVWGLDAPQRMYSEIIALMKAYS.

An N-terminal signal peptide occupies residues 1–18 (MMWLLLTTTCLICGTLNA). The region spanning 79-379 (PVVYMQHALF…DWNHFDFVWG (301 aa)) is the AB hydrolase-1 domain. Residue Ser173 is the Nucleophile of the active site. The cysteines at positions 247 and 256 are disulfide-linked. N-linked (GlcNAc...) asparagine glycosylation occurs at Asn272. Catalysis depends on charge relay system residues Asp344 and His373.

It belongs to the AB hydrolase superfamily. Lipase family. As to expression, highly expressed in the epidermis in the granular keratinocytes. Also detected in other tissues, although at much lower levels, including lung and spleen.

The protein resides in the secreted. It carries out the reaction a sterol ester + H2O = a sterol + a fatty acid + H(+). The enzyme catalyses a triacylglycerol + H2O = a 1,2-diacylglycerol + a fatty acid + H(+). The catalysed reaction is a triacylglycerol + H2O = a diacylglycerol + a fatty acid + H(+). It catalyses the reaction a cholesterol ester + H2O = cholesterol + a fatty acid + H(+). Its function is as follows. Plays a highly specific role in the last step of keratinocyte differentiation. Contains two distinct domains: the alpha/beta hydrolase fold and the abhydrolase-associated lipase region, also features the consensus sequence of the active site of a genuine lipase. May have an essential function in lipid metabolism of the most differentiated epidermal layers. The polypeptide is Lipase member N (LIPN) (Homo sapiens (Human)).